The sequence spans 799 residues: Mitochondrial intermediate peptidase (799 aa).

His-562 contacts Zn(2+). The active site involves Glu-563. The Zn(2+) site is built by His-566 and His-569.

It belongs to the peptidase M3 family. The cofactor is Zn(2+).

It is found in the mitochondrion matrix. The enzyme catalyses Release of an N-terminal octapeptide as second stage of processing of some proteins imported into the mitochondrion.. Its function is as follows. Cleaves proteins, imported into the mitochondrion, to their mature size. While most mitochondrial precursor proteins are processed to the mature form in one step by mitochondrial processing peptidase (MPP), the sequential cleavage by MIP of an octapeptide after initial processing by MPP is a required step for a subgroup of nuclear-encoded precursor proteins destined for the matrix or the inner membrane. This Aspergillus niger (strain ATCC MYA-4892 / CBS 513.88 / FGSC A1513) protein is Mitochondrial intermediate peptidase (oct1).